A 561-amino-acid polypeptide reads, in one-letter code: Tudor and KH domain-containing protein (561 aa).

KH domains are found at residues 52-115 and 124-190; these read DIEI…KAAI and PVSE…KHLI. Residues K65, K76, K110, K112, K152, K175, K181, K187, K193, K256, and K267 each participate in a glycyl lysine isopeptide (Lys-Gly) (interchain with G-Cter in ubiquitin) cross-link. A disordered region spans residues 219–262; the sequence is SVRREDMTEPGGAGEPALWKNTSSSMEPTAPLVTPPPKGGGDMA. Residue S278 is modified to Phosphoserine. One can recognise a Tudor domain in the interval 353-412; that stretch reads TVHVGDIVAAPLPTNGSWYRARVLGTLENGNLDLYFVDFGDNGDCPLKDLRALRSDFLSL. Residues K479, K510, and K529 each participate in a glycyl lysine isopeptide (Lys-Gly) (interchain with G-Cter in ubiquitin) cross-link.

Belongs to the Tdrkh family. In terms of assembly, interacts with (symmetrically methylated) PIWIL1, PIWIL2 and PIWIL4. Post-translationally, ubiquitinated by PRKN during mitophagy, leading to its degradation and enhancement of mitophagy. Deubiquitinated by USP30.

Its subcellular location is the cytoplasm. It localises to the mitochondrion. Functionally, participates in the primary piRNA biogenesis pathway and is required during spermatogenesis to repress transposable elements and prevent their mobilization, which is essential for the germline integrity. The piRNA metabolic process mediates the repression of transposable elements during meiosis by forming complexes composed of piRNAs and Piwi proteins and govern the methylation and subsequent repression of transposons. Required for the final steps of primary piRNA biogenesis by participating in the processing of 31-37 nt intermediates into mature piRNAs. May act in pi-bodies and piP-bodies by transferring piRNA precursors or intermediates to or between these granules. The sequence is that of Tudor and KH domain-containing protein (TDRKH) from Homo sapiens (Human).